The chain runs to 23 residues: Paralytic peptide 2 (23 aa).

A disulfide bridge links C7 with C19.

The protein belongs to the GBP/PSP1/paralytic peptide family. In terms of tissue distribution, hemolymph.

Its function is as follows. Causes rapid, rigid paralysis when injected into Lepidopteran larvae. The physiological role may be to reduce hemolymph loss following injury and promote wound healing. The protein is Paralytic peptide 2 of Spodoptera exigua (Beet armyworm).